Here is a 504-residue protein sequence, read N- to C-terminus: Glucose-6-phosphate isomerase (504 aa).

E333 serves as the catalytic Proton donor. Active-site residues include H364 and K473.

The protein belongs to the GPI family.

Its subcellular location is the cytoplasm. It carries out the reaction alpha-D-glucose 6-phosphate = beta-D-fructose 6-phosphate. Its pathway is carbohydrate biosynthesis; gluconeogenesis. It participates in carbohydrate degradation; glycolysis; D-glyceraldehyde 3-phosphate and glycerone phosphate from D-glucose: step 2/4. Functionally, catalyzes the reversible isomerization of glucose-6-phosphate to fructose-6-phosphate. The sequence is that of Glucose-6-phosphate isomerase from Xanthomonas oryzae pv. oryzae (strain MAFF 311018).